A 109-amino-acid chain; its full sequence is Class I hydrophobin 18 (109 aa).

Residues 1-20 form the signal peptide; that stretch reads MFTEQVLNVIILLQTATVTA. 4 cysteine pairs are disulfide-bonded: Cys-28–Cys-88, Cys-35–Cys-82, Cys-36–Cys-69, and Cys-89–Cys-102. Asn-91 and Asn-106 each carry an N-linked (GlcNAc...) asparagine glycan.

It belongs to the fungal hydrophobin family. In terms of assembly, self-assembles to form functional amyloid fibrils called rodlets. Self-assembly into fibrillar rodlets occurs spontaneously at hydrophobic:hydrophilic interfaces and the rodlets further associate laterally to form amphipathic monolayers.

It localises to the secreted. The protein localises to the cell wall. Functionally, aerial growth, conidiation, and dispersal of filamentous fungi in the environment rely upon a capability of their secreting small amphipathic proteins called hydrophobins (HPBs) with low sequence identity. Class I can self-assemble into an outermost layer of rodlet bundles on aerial cell surfaces, conferring cellular hydrophobicity that supports fungal growth, development and dispersal; whereas Class II form highly ordered films at water-air interfaces through intermolecular interactions but contribute nothing to the rodlet structure. The chain is Class I hydrophobin 18 from Pleurotus ostreatus (strain PC15) (Oyster mushroom).